Reading from the N-terminus, the 329-residue chain is DNA-directed RNA polymerase subunit alpha (329 aa).

The interval 1 to 235 is alpha N-terminal domain (alpha-NTD); sequence MQGSVTEFLK…EQLDAFVDLR (235 aa). Positions 249-329 are alpha C-terminal domain (alpha-CTD); it reads FDPILLRPVD…NWPPASIAED (81 aa).

It belongs to the RNA polymerase alpha chain family. In terms of assembly, homodimer. The RNAP catalytic core consists of 2 alpha, 1 beta, 1 beta' and 1 omega subunit. When a sigma factor is associated with the core the holoenzyme is formed, which can initiate transcription.

The catalysed reaction is RNA(n) + a ribonucleoside 5'-triphosphate = RNA(n+1) + diphosphate. Functionally, DNA-dependent RNA polymerase catalyzes the transcription of DNA into RNA using the four ribonucleoside triphosphates as substrates. The protein is DNA-directed RNA polymerase subunit alpha of Actinobacillus succinogenes (strain ATCC 55618 / DSM 22257 / CCUG 43843 / 130Z).